The chain runs to 705 residues: Elongation factor G (705 aa).

The tr-type G domain occupies 7-287 (HLTRNIGIMA…YVCAFLPSPL (281 aa)). GTP contacts are provided by residues 16–23 (AHIDAGKT), 84–88 (DTPGH), and 138–141 (NKMD). The disordered stretch occupies residues 291–312 (NVVGTNPDTGAEEDRKPSEDDK). Residues 302–312 (EEDRKPSEDDK) show a composition bias toward basic and acidic residues.

The protein belongs to the TRAFAC class translation factor GTPase superfamily. Classic translation factor GTPase family. EF-G/EF-2 subfamily.

It localises to the cytoplasm. In terms of biological role, catalyzes the GTP-dependent ribosomal translocation step during translation elongation. During this step, the ribosome changes from the pre-translocational (PRE) to the post-translocational (POST) state as the newly formed A-site-bound peptidyl-tRNA and P-site-bound deacylated tRNA move to the P and E sites, respectively. Catalyzes the coordinated movement of the two tRNA molecules, the mRNA and conformational changes in the ribosome. This chain is Elongation factor G, found in Bacteroides fragilis (strain ATCC 25285 / DSM 2151 / CCUG 4856 / JCM 11019 / LMG 10263 / NCTC 9343 / Onslow / VPI 2553 / EN-2).